Reading from the N-terminus, the 567-residue chain is Thiol:disulfide interchange protein DsbD (567 aa).

A signal peptide spans 1–19 (MAQRIFTLILLLCSTSAFA). 2 disulfide bridges follow: Cys122–Cys128 and Cys185–Cys307. A run of 7 helical transmembrane segments spans residues 170–192 (ALWALLIGIGIAFTPCVLPMYPL), 212–234 (LAFIYVQGMALTYTALGLVVAAA), 246–268 (YVLIGLAIVFTLLALSMFGLFTL), 297–319 (GAIAGLICSPCTTAPLSAILLYI), 326–348 (WLGGGTLYLYALGMGLPLMLVTV), 358–380 (GPWMAHVKTAFGFVILALPVFLL), and 387–409 (AWGLRLWSLLGVAFFGWAFITSL). Residues 435–567 (QDWAFGSPSA…FSAHLHDRQP (133 aa)) form the Thioredoxin domain. Cysteines 482 and 485 form a disulfide.

This sequence belongs to the thioredoxin family. DsbD subfamily.

It is found in the cell inner membrane. The enzyme catalyses [protein]-dithiol + NAD(+) = [protein]-disulfide + NADH + H(+). It catalyses the reaction [protein]-dithiol + NADP(+) = [protein]-disulfide + NADPH + H(+). Required to facilitate the formation of correct disulfide bonds in some periplasmic proteins and for the assembly of the periplasmic c-type cytochromes. Acts by transferring electrons from cytoplasmic thioredoxin to the periplasm. This transfer involves a cascade of disulfide bond formation and reduction steps. The chain is Thiol:disulfide interchange protein DsbD from Salmonella typhimurium (strain LT2 / SGSC1412 / ATCC 700720).